The following is a 337-amino-acid chain: Ketol-acid reductoisomerase (NADP(+)) (337 aa).

In terms of domain architecture, KARI N-terminal Rossmann spans Leu-3 to Thr-183. NADP(+) contacts are provided by residues Tyr-26–Gln-29, Lys-49, Ser-52, Ser-54, and Asp-84–Gln-87. His-109 is an active-site residue. Gly-135 lines the NADP(+) pocket. Positions Thr-184–Val-329 constitute a KARI C-terminal knotted domain. Asp-192, Glu-196, Glu-228, and Glu-232 together coordinate Mg(2+). Ser-253 provides a ligand contact to substrate.

This sequence belongs to the ketol-acid reductoisomerase family. The cofactor is Mg(2+).

It catalyses the reaction (2R)-2,3-dihydroxy-3-methylbutanoate + NADP(+) = (2S)-2-acetolactate + NADPH + H(+). The catalysed reaction is (2R,3R)-2,3-dihydroxy-3-methylpentanoate + NADP(+) = (S)-2-ethyl-2-hydroxy-3-oxobutanoate + NADPH + H(+). It functions in the pathway amino-acid biosynthesis; L-isoleucine biosynthesis; L-isoleucine from 2-oxobutanoate: step 2/4. The protein operates within amino-acid biosynthesis; L-valine biosynthesis; L-valine from pyruvate: step 2/4. In terms of biological role, involved in the biosynthesis of branched-chain amino acids (BCAA). Catalyzes an alkyl-migration followed by a ketol-acid reduction of (S)-2-acetolactate (S2AL) to yield (R)-2,3-dihydroxy-isovalerate. In the isomerase reaction, S2AL is rearranged via a Mg-dependent methyl migration to produce 3-hydroxy-3-methyl-2-ketobutyrate (HMKB). In the reductase reaction, this 2-ketoacid undergoes a metal-dependent reduction by NADPH to yield (R)-2,3-dihydroxy-isovalerate. The sequence is that of Ketol-acid reductoisomerase (NADP(+)) from Mycobacterium bovis (strain BCG / Pasteur 1173P2).